A 228-amino-acid chain; its full sequence is Urease accessory protein UreF (228 aa).

The protein belongs to the UreF family. In terms of assembly, ureD, UreF and UreG form a complex that acts as a GTP-hydrolysis-dependent molecular chaperone, activating the urease apoprotein by helping to assemble the nickel containing metallocenter of UreC. The UreE protein probably delivers the nickel.

The protein resides in the cytoplasm. Required for maturation of urease via the functional incorporation of the urease nickel metallocenter. The protein is Urease accessory protein UreF of Prochlorococcus marinus (strain MIT 9312).